Here is a 317-residue protein sequence, read N- to C-terminus: N-acetyl-gamma-glutamyl-phosphate reductase (317 aa).

Cysteine 136 is a catalytic residue.

The protein belongs to the NAGSA dehydrogenase family. Type 1 subfamily.

Its subcellular location is the cytoplasm. The catalysed reaction is N-acetyl-L-glutamate 5-semialdehyde + phosphate + NADP(+) = N-acetyl-L-glutamyl 5-phosphate + NADPH + H(+). Its pathway is amino-acid biosynthesis; L-arginine biosynthesis; N(2)-acetyl-L-ornithine from L-glutamate: step 3/4. Functionally, catalyzes the NADPH-dependent reduction of N-acetyl-5-glutamyl phosphate to yield N-acetyl-L-glutamate 5-semialdehyde. The sequence is that of N-acetyl-gamma-glutamyl-phosphate reductase from Stenotrophomonas maltophilia (strain R551-3).